The following is a 344-amino-acid chain: Cycloartenol-C-24-methyltransferase 1 (344 aa).

Belongs to the class I-like SAM-binding methyltransferase superfamily. Erg6/SMT family.

It carries out the reaction zymosterol + S-adenosyl-L-methionine = fecosterol + S-adenosyl-L-homocysteine + H(+). Its pathway is steroid biosynthesis; sterol biosynthesis. Functionally, catalyzes the methyl transfer from S-adenosyl-methionine to the C-24 of cycloartenol to form 24-methylene cycloartenol. The protein is Cycloartenol-C-24-methyltransferase 1 (Smt1-1) of Oryza sativa subsp. japonica (Rice).